Here is a 154-residue protein sequence, read N- to C-terminus: Deoxyuridine 5'-triphosphate nucleotidohydrolase (154 aa).

Substrate is bound by residues 64–66 (RSG), Asn77, 81–83 (TID), and Lys91.

The protein belongs to the dUTPase family. Homotrimer. The cofactor is Mg(2+).

The catalysed reaction is dUTP + H2O = dUMP + diphosphate + H(+). Its pathway is pyrimidine metabolism; dUMP biosynthesis; dUMP from dCTP (dUTP route): step 2/2. In terms of biological role, this enzyme is involved in nucleotide metabolism: it produces dUMP, the immediate precursor of thymidine nucleotides and it decreases the intracellular concentration of dUTP so that uracil cannot be incorporated into DNA. The sequence is that of Deoxyuridine 5'-triphosphate nucleotidohydrolase from Mycobacterium sp. (strain JLS).